A 250-amino-acid chain; its full sequence is ATP synthase subunit a (250 aa).

A run of 5 helical transmembrane segments spans residues 27-47 (TDTV…AFYL), 83-103 (IAPF…ISNW), 129-149 (INYV…AGIW), 191-211 (IFAG…IMWA), and 219-239 (FDLF…ILYF).

Belongs to the ATPase A chain family. As to quaternary structure, F-type ATPases have 2 components, CF(1) - the catalytic core - and CF(0) - the membrane proton channel. CF(1) has five subunits: alpha(3), beta(3), gamma(1), delta(1), epsilon(1). CF(0) has three main subunits: a(1), b(2) and c(9-12). The alpha and beta chains form an alternating ring which encloses part of the gamma chain. CF(1) is attached to CF(0) by a central stalk formed by the gamma and epsilon chains, while a peripheral stalk is formed by the delta and b chains.

Its subcellular location is the cell membrane. Key component of the proton channel; it plays a direct role in the translocation of protons across the membrane. This chain is ATP synthase subunit a, found in Mycobacterium ulcerans (strain Agy99).